A 341-amino-acid polypeptide reads, in one-letter code: Foldase protein PrsA (341 aa).

A signal peptide spans 1–22 (MKNIGRLAVTALIAVFIFSVTG). Residue C23 is the site of N-palmitoyl cysteine attachment. The S-diacylglycerol cysteine moiety is linked to residue C23. One can recognise a PpiC domain in the interval 199–291 (PNKMHLAHIL…FGYHIIKCIK (93 aa)).

Belongs to the PrsA family.

It is found in the cell membrane. It catalyses the reaction [protein]-peptidylproline (omega=180) = [protein]-peptidylproline (omega=0). Its function is as follows. Plays a major role in protein secretion by helping the post-translocational extracellular folding of several secreted proteins. The protein is Foldase protein PrsA of Clostridium kluyveri (strain NBRC 12016).